An 822-amino-acid chain; its full sequence is Integrator complex assembly factor BRAT1 (822 aa).

Residues 100–200 (LGLFGESGAP…WPMCAQKIVN (101 aa)) are required for interaction with NDFIP1. HEAT repeat units follow at residues 495–531 (LLFL…IRHW) and 544–576 (SEVP…SSQG). Ser743 carries the phosphoserine modification. The BRAT1-like motif motif lies at 820 to 822 (DCY). Cys821 lines the Zn(2+) pocket.

This sequence belongs to the BRAT1 family. Part of the multiprotein complex composed of BRAT1, WDR73, as well as integrator complex subunits INTS9 and INTS11. Interacts with BRCA1 and ATM. Interacts with MTOR and RPTOR. Interacts with NDFIP1. Interacts with SMC1A and PRKDC. Post-translationally, ubiquitinated by NEDD4, NEDD4L and ITCH; mono- and polyubiquitinated forms are detected. High levels detected in the cortex and much lower levels detected in the cerebellum, spinal cord and lung (at protein level).

Its subcellular location is the nucleus. It localises to the cytoplasm. Its function is as follows. Component of a multiprotein complex required for the assembly of the RNA endonuclease module of the integrator complex. Associates with INTS9 and INTS11 in the cytoplasm and blocks the active site of INTS11 to inhibit the endonuclease activity of INTS11 before formation of the full integrator complex. Following dissociation of WDR73 of the complex, BRAT1 facilitates the nuclear import of the INTS9-INTS11 heterodimer. In the nucleus, INTS4 is integrated to the INTS9-INTS11 heterodimer and BRAT1 is released from the mature RNA endonuclease module by inositol hexakisphosphate (InsP6). BRAT1 is also involved in DNA damage response; activates kinases ATM, SMC1A and PRKDC by modulating their phosphorylation status following ionizing radiation (IR) stress. Plays a role in regulating mitochondrial function and cell proliferation. Required for protein stability of MTOR and MTOR-related proteins, and cell cycle progress by growth factors. The sequence is that of Integrator complex assembly factor BRAT1 from Mus musculus (Mouse).